We begin with the raw amino-acid sequence, 149 residues long: Stathmin (149 aa).

Alanine 2 is modified (N-acetylalanine). Serine 4 bears the Phosphoserine mark. Residues 4 to 145 enclose the SLD domain; sequence SDIQVKELEK…NKESKDPADE (142 aa). Lysine 9 bears the N6-acetyllysine mark. Serine 16 is modified (phosphoserine; by PKA). A Phosphoserine; by CDK1, MAPK1 and MAPK3 modification is found at serine 25. Residues 27–46 form a disordered region; that stretch reads RSKESVPDFPLSPPKKKDLS. Position 29 is an N6-methyllysine (lysine 29). Serine 31 carries the post-translational modification Phosphoserine. Serine 38 carries the post-translational modification Phosphoserine; by CDK1, MAPK1 and MAPK3. Positions 41–140 form a coiled coil; it reads KKKDLSLEEI…EEVRKNKESK (100 aa). Serine 63 carries the post-translational modification Phosphoserine; by PKA. 2 positions are modified to N6-acetyllysine: lysine 100 and lysine 119. The segment covering 104 to 143 has biased composition (basic and acidic residues); that stretch reads KMEANKENREAQMAAKLERLREKDKHVEEVRKNKESKDPA. Residues 104-149 form a disordered region; that stretch reads KMEANKENREAQMAAKLERLREKDKHVEEVRKNKESKDPADETEAD.

The protein belongs to the stathmin family. In terms of assembly, binds to two alpha/beta-tubulin heterodimers. Interacts with KIST. Many different phosphorylated forms are observed depending on specific combinations among the sites which can be phosphorylated. MAPK is responsible for the phosphorylation of stathmin in response to NGF. Phosphorylation at Ser-16 seems to be required for neuron polarization. As to expression, highly expressed in the lateral nucleus of the amygdala.

Its subcellular location is the cytoplasm. The protein localises to the cytoskeleton. Functionally, involved in the regulation of the microtubule (MT) filament system by destabilizing microtubules. Prevents assembly and promotes disassembly of microtubules. Phosphorylation at Ser-16 may be required for axon formation during neurogenesis. Involved in the control of the learned and innate fear. The chain is Stathmin (Stmn1) from Mus musculus (Mouse).